A 357-amino-acid polypeptide reads, in one-letter code: MFSKLKEVESRYLELEKLLSDPTVVTRQSLYQKYAKEHADLRDLVEVFRKYEKVGAAIEEAQQLLRGDDEELKEIAREELPELRQHLAGLEERLKVLLLPRDLNDDRNVFLEIRAGTGGDEAGLFVGDLFRMYARYAEMRRWKVEVISSTPSSGVGGFKEIIASIAGQGAYSQLKYESGVHRVQRVPVTEAQGRIHTSAVTVAIMPEADEVEVTIDPNDLRIDVFHSSGHGGQSVNTTDSAVRITHLPTGLVVSCQDEKSQLKNKAKALKVLRARLLDIMVKKQSDEISEARKSQVGSGDRSERIRTYNFPQGRVTDHRVGLTLYSLENILGGDIQEFIDALTAYFQAESLKQQSTG.

N5-methylglutamine is present on Gln233.

The protein belongs to the prokaryotic/mitochondrial release factor family. Methylated by PrmC. Methylation increases the termination efficiency of RF1.

Its subcellular location is the cytoplasm. In terms of biological role, peptide chain release factor 1 directs the termination of translation in response to the peptide chain termination codons UAG and UAA. The chain is Peptide chain release factor 1 from Syntrophus aciditrophicus (strain SB).